The following is a 66-amino-acid chain: Large ribosomal subunit protein uL29 (66 aa).

The protein belongs to the universal ribosomal protein uL29 family.

In Bartonella tribocorum (strain CIP 105476 / IBS 506), this protein is Large ribosomal subunit protein uL29.